A 317-amino-acid chain; its full sequence is Protease 7 (317 aa).

The signal sequence occupies residues 1 to 20 (MRAKLLGIVLTTPIAISSFA). Over 21-31 (STETLSFTPDN) the chain is Periplasmic. The chain crosses the membrane as a beta stranded span at residues 32-41 (INADISLGTL). Over 42–69 (SGKTKERVYLAEEGGRKVSQLDWKFNNA) the chain is Extracellular. The chain crosses the membrane as a beta stranded span at residues 70–78 (AIIKGAINW). Residues 79–83 (DLMPQ) are Periplasmic-facing. Residues 84–92 (ISIGAAGWT) form a beta stranded membrane-spanning segment. The Extracellular portion of the chain corresponds to 93–130 (TLGSRGGNMVDQDWMDSSNPGTWTDESRHPDTQLNYAN). Catalysis depends on residues D103 and D105. The beta stranded transmembrane segment at 131 to 140 (EFDLNIKGWL) threads the bilayer. Over 141–145 (LNEPN) the chain is Periplasmic. Residues 146-156 (YRLGLMAGYQE) traverse the membrane as a beta stranded segment. Residues 157–197 (SRYSFTARGGSYIYSSEEGFRDDIGSFPNGERAIGYKQRFK) lie on the Extracellular side of the membrane. The chain crosses the membrane as a beta stranded span at residues 198–209 (MPYIGLTGSYRY). At 210–211 (ED) the chain is on the periplasmic side. The chain crosses the membrane as a beta stranded span at residues 212 to 221 (FELGGTFKYS). Residues 222–250 (GWVEASDNDEHYDPGKRITYRSKVKDQNY) lie on the Extracellular side of the membrane. Catalysis depends on residues D230 and H232. Residues 251–261 (YSVSVNAGYYV) traverse the membrane as a beta stranded segment. The Periplasmic segment spans residues 262 to 264 (TPN). A beta stranded transmembrane segment spans residues 265 to 274 (AKVYVEGTWN). The Extracellular segment spans residues 275 to 306 (RVTNKKGNTSLYDHNDNTSDYSKNGAGIENYN). The chain crosses the membrane as a beta stranded span at residues 307 to 316 (FITTAGLKYT). F317 is a topological domain (periplasmic).

It belongs to the peptidase A26 family. Homopentamer.

The protein localises to the cell outer membrane. It carries out the reaction Has a virtual requirement for Arg in the P1 position and a slightly less stringent preference for this residue in the P1' position, which can also contain Lys, Gly or Val.. Its activity is regulated as follows. Inhibited by zinc. In terms of biological role, protease that can cleave T7 RNA polymerase, ferric enterobactin receptor protein (FEP), antimicrobial peptide protamine and other proteins. This protease has a specificity for paired basic residues. This is Protease 7 (ompT) from Escherichia coli O157:H7.